A 154-amino-acid polypeptide reads, in one-letter code: Transcriptional repressor NrdR (154 aa).

Residues 3–34 fold into a zinc finger; that stretch reads CPFCAHPDTRVADSRLMEERNAVRRRRHCPNC. An ATP-cone domain is found at 49 to 139; it reads PAVIGPDKKR…LHKRFDNPAD (91 aa).

The protein belongs to the NrdR family. Requires Zn(2+) as cofactor.

In terms of biological role, negatively regulates transcription of bacterial ribonucleotide reductase nrd genes and operons by binding to NrdR-boxes. The protein is Transcriptional repressor NrdR of Neisseria meningitidis serogroup B (strain ATCC BAA-335 / MC58).